Here is a 488-residue protein sequence, read N- to C-terminus: MQEKLDLVIEGGWVIDGLGGPRRRADVGIRGERIAAIGDLSAAPADRRLDAGGRIVAPGFIDTHGHDDLMFVEKPGLEWKTSQGITSVVVGNCGISGAPAPLPGNTAAALALLGDSPLFADMAMYFGALEAQRPMINVAALVGHANLRLAAMRDPAAQPSAKEQRAMERMLADALEAGAVGFSTGLAYQPGGVAEQAELDGLARVAAARGALHTSHIRNEGDAVEAAVDEVLAVGRRTGCATVLSHHKCMMPANWGKSAATLANIDRARAAGVDVALDIYPYPGSSTILIPERADQIDDIRITWSTPHPECGGQSLAEIAARWGCDAVTAARRLCPAGAIYFAMDENEVRRIFQHECCMVGSDGLPNDAHPHPRLWGSFTRVLGRYVREAELLTLEAAVAKMTALPARVFGLADRGRLAVGAWADVVVFDADTVCDRATWDAPTLASAGIEHVLVNGCAVFPQAPPSHRPGRILRRDASIAGAPEFSR.

It belongs to the metallo-dependent hydrolases superfamily. N-acyl-D-amino-acid deacylase family. Zn(2+) is required as a cofactor.

It localises to the cytoplasm. The catalysed reaction is an N-acyl-D-glutamate + H2O = D-glutamate + a carboxylate. With respect to regulation, inhibited by cobalt, copper and EDTA. The sequence is that of N-acyl-D-glutamate deacylase from Alcaligenes xylosoxydans xylosoxydans (Achromobacter xylosoxidans).